The primary structure comprises 65 residues: Large ribosomal subunit protein bL35 (65 aa).

Belongs to the bacterial ribosomal protein bL35 family.

This Synechococcus sp. (strain WH7803) protein is Large ribosomal subunit protein bL35.